A 458-amino-acid chain; its full sequence is Phosphoglucosamine mutase (458 aa).

The active-site Phosphoserine intermediate is the S106. Residues S106, D247, D249, and D251 each coordinate Mg(2+). S106 is subject to Phosphoserine.

It belongs to the phosphohexose mutase family. The cofactor is Mg(2+). Post-translationally, activated by phosphorylation.

The enzyme catalyses alpha-D-glucosamine 1-phosphate = D-glucosamine 6-phosphate. Its function is as follows. Catalyzes the conversion of glucosamine-6-phosphate to glucosamine-1-phosphate. The chain is Phosphoglucosamine mutase from Chlamydia felis (strain Fe/C-56) (Chlamydophila felis).